Here is a 199-residue protein sequence, read N- to C-terminus: Hematopoietic prostaglandin D synthase (199 aa).

A GST N-terminal domain is found at 2–79 (PNYKLLYFNM…YLTKNTDLAG (78 aa)). Glutathione-binding positions include Tyr8, Arg14, Trp39, 49 to 51 (GKI), and 63 to 64 (QS). In terms of domain architecture, GST C-terminal spans 81 to 199 (TALEQCQADA…WILKRPQTKL (119 aa)).

The protein belongs to the GST superfamily. Sigma family. As to quaternary structure, homodimer. It depends on glutathione as a cofactor. As to expression, expressed in skin and oviduct.

The protein localises to the cytoplasm. The catalysed reaction is prostaglandin H2 = prostaglandin D2. It carries out the reaction RX + glutathione = an S-substituted glutathione + a halide anion + H(+). The enzyme catalyses 2-glyceryl-prostaglandin H2 = 2-glyceryl-prostaglandin D2. Its function is as follows. Bifunctional enzyme which catalyzes both the conversion of PGH2 to PGD2, a prostaglandin involved in smooth muscle contraction/relaxation and a potent inhibitor of platelet aggregation, and the conjugation of glutathione with a wide range of aryl halides and organic isothiocyanates. Also exhibits low glutathione-peroxidase activity. The protein is Hematopoietic prostaglandin D synthase of Mus musculus (Mouse).